Reading from the N-terminus, the 113-residue chain is MKLLTTICRLKLEKMYSKTNTSSTIFEKARHGTEKISTARSEGHHITFSRWKACTAIGGRCKNLCDDSEFRISYCSRPTTRCCVTECDPTDPNNWIPKDSVGTQEWYPKDSRH.

Intrachain disulfides connect C54–C82, C61–C75, and C65–C83.

This sequence belongs to the beta-defensin family.

The protein localises to the secreted. Has antibacterial activity. This is Beta-defensin 112 (DEFB112) from Pan troglodytes (Chimpanzee).